The chain runs to 434 residues: Peptidase B (434 aa).

Positions 198 and 203 each coordinate Mn(2+). Residue Lys-210 is part of the active site. Residues Asp-221, Asp-280, and Glu-282 each coordinate Mn(2+). Arg-284 is a catalytic residue.

It belongs to the peptidase M17 family. In terms of assembly, homohexamer. Mn(2+) serves as cofactor.

It localises to the cytoplasm. It catalyses the reaction Release of an N-terminal amino acid, Xaa, from a peptide or arylamide. Xaa is preferably Glu or Asp but may be other amino acids, including Leu, Met, His, Cys and Gln.. In terms of biological role, probably plays an important role in intracellular peptide degradation. The sequence is that of Peptidase B from Pasteurella multocida (strain Pm70).